The sequence spans 576 residues: Adenine deaminase (576 aa).

It belongs to the metallo-dependent hydrolases superfamily. Adenine deaminase family. Requires Mn(2+) as cofactor.

The enzyme catalyses adenine + H2O + H(+) = hypoxanthine + NH4(+). This chain is Adenine deaminase, found in Syntrophobacter fumaroxidans (strain DSM 10017 / MPOB).